The sequence spans 191 residues: Protein Ves (191 aa).

This sequence belongs to the Ves family.

In Escherichia coli (strain UTI89 / UPEC), this protein is Protein Ves.